Reading from the N-terminus, the 240-residue chain is Uridylate kinase (240 aa).

14 to 17 serves as a coordination point for ATP; it reads KLSG. G56 is a binding site for UMP. Residues G57 and R61 each contribute to the ATP site. UMP is bound by residues D76 and 137–144; that span reads TGNPFFTT. ATP is bound by residues T164, Y170, and D173.

It belongs to the UMP kinase family. In terms of assembly, homohexamer.

The protein localises to the cytoplasm. The enzyme catalyses UMP + ATP = UDP + ADP. Its pathway is pyrimidine metabolism; CTP biosynthesis via de novo pathway; UDP from UMP (UMPK route): step 1/1. With respect to regulation, inhibited by UTP. Functionally, catalyzes the reversible phosphorylation of UMP to UDP. The polypeptide is Uridylate kinase (Albidiferax ferrireducens (strain ATCC BAA-621 / DSM 15236 / T118) (Rhodoferax ferrireducens)).